The chain runs to 153 residues: MYSSASPIGAGASVVELAISFFTLNNKFSLLRSCWMEDLILRKLFQWSCKISLWRCSWESFEAEIAGLESQICVNESITSCLWPKIPSNCLSIFFSWPVCSELVVCANVEYLERSDSVCVSREMALPLMVTKDGCELMWCGCLSGIGLFPVSS.

This is an uncharacterized protein from Saccharomyces cerevisiae (strain ATCC 204508 / S288c) (Baker's yeast).